A 116-amino-acid chain; its full sequence is Large ribosomal subunit protein bL20 (116 aa).

The protein belongs to the bacterial ribosomal protein bL20 family.

Functionally, binds directly to 23S ribosomal RNA and is necessary for the in vitro assembly process of the 50S ribosomal subunit. It is not involved in the protein synthesizing functions of that subunit. This chain is Large ribosomal subunit protein bL20, found in Bacteroides thetaiotaomicron (strain ATCC 29148 / DSM 2079 / JCM 5827 / CCUG 10774 / NCTC 10582 / VPI-5482 / E50).